A 1479-amino-acid chain; its full sequence is Chromosome partition protein MukB (1479 aa).

An ATP-binding site is contributed by 34-41 (GGNGAGKS). Coiled-coil stretches lie at residues 337–418 (LNLV…QYQQ), 511–603 (QAER…RAPV), 780–810 (RAAR…DVQK), 847–1116 (ELDR…AKAG), and 1206–1265 (DDPV…LQAV). The tract at residues 666–783 (PGGSEDPRLN…EVPLFGRAAR (118 aa)) is flexible hinge.

Belongs to the SMC family. MukB subfamily. As to quaternary structure, homodimerization via its hinge domain. Binds to DNA via its C-terminal region. Interacts, and probably forms a ternary complex, with MukE and MukF via its C-terminal region. The complex formation is stimulated by calcium or magnesium. Interacts with tubulin-related protein FtsZ.

Its subcellular location is the cytoplasm. The protein localises to the nucleoid. In terms of biological role, plays a central role in chromosome condensation, segregation and cell cycle progression. Functions as a homodimer, which is essential for chromosome partition. Involved in negative DNA supercoiling in vivo, and by this means organize and compact chromosomes. May achieve or facilitate chromosome segregation by condensation DNA from both sides of a centrally located replisome during cell division. The chain is Chromosome partition protein MukB from Pectobacterium carotovorum subsp. carotovorum (strain PC1).